The following is a 227-amino-acid chain: Transmembrane emp24 domain-containing protein 1 (227 aa).

The signal sequence occupies residues 1–23; the sequence is MMAAGTALGLALWLLLPPVGVGG. Residues 24 to 194 are Extracellular-facing; that stretch reads AGPPPIQDGE…LQEGNLERVN (171 aa). The 83-residue stretch at 43–125 folds into the GOLD domain; the sequence is KQCFYQSAPA…EKLVFFELIF (83 aa). The stretch at 145–170 forms a coiled coil; that stretch reads EILEVKMEDIKESIETMRIRLERSIQ. The helical transmembrane segment at 195–215 threads the bilayer; sequence FWSAVNVAVLLLVAVLQVCTL. Residues 216–227 are Cytoplasmic-facing; the sequence is KRFFQDKRPVPM. The short motif at 218–219 is the COPII vesicle coat-binding element; sequence FF. Positions 218 to 227 match the COPI vesicle coat-binding motif; it reads FFQDKRPVPM.

Belongs to the EMP24/GP25L family. As to quaternary structure, homodimer in endoplasmic reticulum, endoplasmic reticulum-Golgi intermediate compartment and cis-Golgi network. Interacts with IL1RL1. Interacts with RNF26; this interaction is important to modulate innate immune signaling through the cGAS-STING pathway.

Its subcellular location is the cell membrane. The protein localises to the endoplasmic reticulum membrane. The protein resides in the golgi apparatus. It is found in the cis-Golgi network membrane. It localises to the endoplasmic reticulum-Golgi intermediate compartment membrane. Functionally, potential role in vesicular protein trafficking, mainly in the early secretory pathway. May act as a cargo receptor at the lumenal side for incorporation of secretory cargo molecules into transport vesicles and may be involved in vesicle coat formation at the cytoplasmic side. Plays a positive role in IL-33-mediated IL-8 and IL-6 production by interacting with interleukin-33 receptor IL1RL1. Plays also a role in the modulation of innate immune signaling through the cGAS-STING pathway by interacting with RNF26. This chain is Transmembrane emp24 domain-containing protein 1 (TMED1), found in Bos taurus (Bovine).